Consider the following 412-residue polypeptide: Imidazolonepropionase (412 aa).

2 residues coordinate Fe(3+): histidine 76 and histidine 78. The Zn(2+) site is built by histidine 76 and histidine 78. Residues arginine 85, tyrosine 148, and histidine 181 each contribute to the 4-imidazolone-5-propanoate site. Tyrosine 148 is a binding site for N-formimidoyl-L-glutamate. Histidine 242 lines the Fe(3+) pocket. Histidine 242 contacts Zn(2+). Glutamate 245 is a binding site for 4-imidazolone-5-propanoate. Residue aspartate 317 coordinates Fe(3+). Aspartate 317 serves as a coordination point for Zn(2+). N-formimidoyl-L-glutamate-binding residues include asparagine 319 and glycine 321. Serine 322 contacts 4-imidazolone-5-propanoate.

It belongs to the metallo-dependent hydrolases superfamily. HutI family. The cofactor is Zn(2+). Fe(3+) is required as a cofactor.

It is found in the cytoplasm. The enzyme catalyses 4-imidazolone-5-propanoate + H2O = N-formimidoyl-L-glutamate. It participates in amino-acid degradation; L-histidine degradation into L-glutamate; N-formimidoyl-L-glutamate from L-histidine: step 3/3. Catalyzes the hydrolytic cleavage of the carbon-nitrogen bond in imidazolone-5-propanoate to yield N-formimidoyl-L-glutamate. It is the third step in the universal histidine degradation pathway. This Staphylococcus aureus (strain bovine RF122 / ET3-1) protein is Imidazolonepropionase.